A 671-amino-acid polypeptide reads, in one-letter code: NADH-quinone oxidoreductase subunit G (671 aa).

The 78-residue stretch at 1-78 (MIKLNVDGSE…GMVIHTDTPM (78 aa)) folds into the 2Fe-2S ferredoxin-type domain. Residues Cys-34, Cys-45, Cys-48, and Cys-62 each contribute to the [2Fe-2S] cluster site. The 4Fe-4S His(Cys)3-ligated-type domain occupies 78-117 (MVKKAREGVMEFLLINHPLDCPICDQGGECNLQDQAFRYG). His-94, Cys-98, Cys-101, Cys-107, Cys-146, Cys-149, Cys-152, and Cys-196 together coordinate [4Fe-4S] cluster. A 4Fe-4S Mo/W bis-MGD-type domain is found at 215–271 (LKHTASIGVHDAEGSNIRIDSRGDEVMRILPRVNEEINEEWLSDKNRFSYDGLKYQR).

It belongs to the complex I 75 kDa subunit family. It depends on [2Fe-2S] cluster as a cofactor. Requires [4Fe-4S] cluster as cofactor.

It catalyses the reaction a quinone + NADH + 5 H(+)(in) = a quinol + NAD(+) + 4 H(+)(out). Functionally, NDH-1 shuttles electrons from NADH, via FMN and iron-sulfur (Fe-S) centers, to quinones in the respiratory chain. Couples the redox reaction to proton translocation (for every two electrons transferred, four hydrogen ions are translocated across the cytoplasmic membrane), and thus conserves the redox energy in a proton gradient. The sequence is that of NADH-quinone oxidoreductase subunit G (nuoG) from Rickettsia conorii (strain ATCC VR-613 / Malish 7).